Consider the following 132-residue polypeptide: Small ribosomal subunit protein uS8 (132 aa).

The protein belongs to the universal ribosomal protein uS8 family. As to quaternary structure, part of the 30S ribosomal subunit. Contacts proteins S5 and S12.

One of the primary rRNA binding proteins, it binds directly to 16S rRNA central domain where it helps coordinate assembly of the platform of the 30S subunit. This chain is Small ribosomal subunit protein uS8, found in Streptomyces coelicolor (strain ATCC BAA-471 / A3(2) / M145).